A 248-amino-acid chain; its full sequence is Deoxyribose-phosphate aldolase (248 aa).

The active-site Proton donor/acceptor is the D106. The Schiff-base intermediate with acetaldehyde role is filled by K168. K197 acts as the Proton donor/acceptor in catalysis.

This sequence belongs to the DeoC/FbaB aldolase family. DeoC type 1 subfamily.

The protein resides in the cytoplasm. The catalysed reaction is 2-deoxy-D-ribose 5-phosphate = D-glyceraldehyde 3-phosphate + acetaldehyde. Its pathway is carbohydrate degradation; 2-deoxy-D-ribose 1-phosphate degradation; D-glyceraldehyde 3-phosphate and acetaldehyde from 2-deoxy-alpha-D-ribose 1-phosphate: step 2/2. Catalyzes a reversible aldol reaction between acetaldehyde and D-glyceraldehyde 3-phosphate to generate 2-deoxy-D-ribose 5-phosphate. This chain is Deoxyribose-phosphate aldolase, found in Sinorhizobium medicae (strain WSM419) (Ensifer medicae).